Here is a 117-residue protein sequence, read N- to C-terminus: Appetite-regulating hormone (117 aa).

Positions 1–23 are cleaved as a signal peptide; the sequence is MPSLGTMCSLLLFSVLWVDLAMA. S26 carries O-decanoyl serine; alternate lipidation. A lipid anchor (O-hexanoyl serine; alternate) is attached at S26. Residue S26 is the site of O-octanoyl serine; alternate attachment. Residues 30-68 are disordered; the sequence is PEHQKLQQRKESKKPPAKLQPRALEGSLGPEDTSQVEEA. A compositionally biased stretch (basic and acidic residues) spans 31–43; it reads EHQKLQQRKESKK. Residues 52 to 75 constitute a propeptide, removed in mature form; the sequence is ALEGSLGPEDTSQVEEAEDELEIR. L98 is subject to Leucine amide. Residues 99–117 constitute a propeptide, removed in mature form; the sequence is GKFLQEVLWEDTNEALADE.

Belongs to the motilin family. Post-translationally, O-octanoylated by GOAT/MBOAT4. O-octanoylation is essential for ghrelin activity. Amidation of Leu-98 is essential for obestatin activity.

It is found in the secreted. Functionally, ghrelin is the ligand for growth hormone secretagogue receptor type 1 (GHSR). Induces the release of growth hormone from the pituitary. Has an appetite-stimulating effect, induces adiposity and stimulates gastric acid secretion. Involved in growth regulation. Obestatin may be the ligand for GPR39. May have an appetite-reducing effect resulting in decreased food intake. May reduce gastric emptying activity and jejunal motility. The protein is Appetite-regulating hormone (GHRL) of Canis lupus familiaris (Dog).